A 510-amino-acid chain; its full sequence is NAD(P)H-quinone oxidoreductase subunit 2 A, chloroplastic (510 aa).

13 helical membrane-spanning segments follow: residues 24–44 (LLLF…GLIL), 57–77 (IPWL…ALLF), 99–119 (IFQF…VEYI), 124–144 (MAIT…MFLC), 149–169 (LITI…LSGY), 183–203 (YLLM…WLYG), 227–247 (PGIS…LSPA), 295–315 (WHLL…LIAI), 323–343 (MLAY…IVGD), 354–374 (YMLF…LFGL), 395–415 (ALSL…AGFF), 418–438 (LYLF…IGLL), and 484–504 (MIVC…IIAI).

The protein belongs to the complex I subunit 2 family. As to quaternary structure, NDH is composed of at least 16 different subunits, 5 of which are encoded in the nucleus.

The protein resides in the plastid. It localises to the chloroplast thylakoid membrane. It catalyses the reaction a plastoquinone + NADH + (n+1) H(+)(in) = a plastoquinol + NAD(+) + n H(+)(out). The catalysed reaction is a plastoquinone + NADPH + (n+1) H(+)(in) = a plastoquinol + NADP(+) + n H(+)(out). In terms of biological role, NDH shuttles electrons from NAD(P)H:plastoquinone, via FMN and iron-sulfur (Fe-S) centers, to quinones in the photosynthetic chain and possibly in a chloroplast respiratory chain. The immediate electron acceptor for the enzyme in this species is believed to be plastoquinone. Couples the redox reaction to proton translocation, and thus conserves the redox energy in a proton gradient. The protein is NAD(P)H-quinone oxidoreductase subunit 2 A, chloroplastic of Solanum bulbocastanum (Wild potato).